Reading from the N-terminus, the 256-residue chain is Transcription factor BHLH094 (256 aa).

The segment at 1–125 is disordered; it reads MDPAPSLAAE…TPPEPPKQDY (125 aa). Residues 79 to 97 show a composition bias toward basic and acidic residues; the sequence is PEAKRLKPMKSSDKNDSLR. Residues 134–147 are basic motif; degenerate; the sequence is QATDSHSLAERARR. One can recognise a bHLH domain in the interval 134–184; that stretch reads QATDSHSLAERARREKISERMKILQDLVPGCNKVIGKASVLDEIINYIQSL. The tract at residues 148–184 is helix-loop-helix motif; the sequence is EKISERMKILQDLVPGCNKVIGKASVLDEIINYIQSL.

It belongs to the bHLH protein family. As to quaternary structure, interacts with RSS3. Forms a ternary complex with RSS3 and TIFY11A/JAZ9 in the nucleus.

It is found in the nucleus. Transcription factor that forms a ternary complex with RSS3 and TIFY11A/JAZ9 to negatively regulate jasmonate-responsive genes. This is Transcription factor BHLH094 from Oryza sativa subsp. japonica (Rice).